The sequence spans 68 residues: UPF0291 protein TTE2340 (68 aa).

This sequence belongs to the UPF0291 family.

The protein localises to the cytoplasm. This Caldanaerobacter subterraneus subsp. tengcongensis (strain DSM 15242 / JCM 11007 / NBRC 100824 / MB4) (Thermoanaerobacter tengcongensis) protein is UPF0291 protein TTE2340.